The sequence spans 368 residues: ATP-dependent (S)-NAD(P)H-hydrate dehydratase (368 aa).

In terms of domain architecture, YjeF C-terminal spans 13–357; the sequence is LFKKVRKIVP…DEVHESFLEL (345 aa). (6S)-NADPHX contacts are provided by residues G125 and 178–184; that span reads NVNEFSR. Residues 231–235 and 250–259 each bind ATP; these read KGPHD and GGLKRSGGQG. D260 serves as a coordination point for (6S)-NADPHX.

It belongs to the NnrD/CARKD family. The cofactor is Mg(2+).

The protein resides in the cytoplasm. It carries out the reaction (6S)-NADHX + ATP = ADP + phosphate + NADH + H(+). It catalyses the reaction (6S)-NADPHX + ATP = ADP + phosphate + NADPH + H(+). Functionally, catalyzes the dehydration of the S-form of NAD(P)HX at the expense of ATP, which is converted to ADP. Together with NAD(P)HX epimerase, which catalyzes the epimerization of the S- and R-forms, the enzyme allows the repair of both epimers of NAD(P)HX, a damaged form of NAD(P)H that is a result of enzymatic or heat-dependent hydration. The protein is ATP-dependent (S)-NAD(P)H-hydrate dehydratase of Aspergillus fumigatus (strain ATCC MYA-4609 / CBS 101355 / FGSC A1100 / Af293) (Neosartorya fumigata).